Here is a 211-residue protein sequence, read N- to C-terminus: Methylthioribulose-1-phosphate dehydratase (211 aa).

Zn(2+) contacts are provided by His-105 and His-107.

Belongs to the aldolase class II family. MtnB subfamily. Zn(2+) serves as cofactor.

It catalyses the reaction 5-(methylsulfanyl)-D-ribulose 1-phosphate = 5-methylsulfanyl-2,3-dioxopentyl phosphate + H2O. The protein operates within amino-acid biosynthesis; L-methionine biosynthesis via salvage pathway; L-methionine from S-methyl-5-thio-alpha-D-ribose 1-phosphate: step 2/6. Functionally, catalyzes the dehydration of methylthioribulose-1-phosphate (MTRu-1-P) into 2,3-diketo-5-methylthiopentyl-1-phosphate (DK-MTP-1-P). The polypeptide is Methylthioribulose-1-phosphate dehydratase (Acidiphilium cryptum (strain JF-5)).